The sequence spans 555 residues: Potassium-transporting ATPase potassium-binding subunit (555 aa).

Helical transmembrane passes span 2–22 (IWVA…PTGI), 60–80 (QYAL…YFIF), 130–150 (IGIT…VMAF), 173–193 (VFLP…VPQT), 246–266 (MSNI…PFTY), 278–298 (ILFV…TTSE), 374–394 (AGFV…GLMV), 412–432 (LIAV…ALAL), 483–503 (LVMF…AASL), and 525–545 (GIFI…MLVL).

Belongs to the KdpA family. In terms of assembly, the system is composed of three essential subunits: KdpA, KdpB and KdpC.

It is found in the cell membrane. In terms of biological role, part of the high-affinity ATP-driven potassium transport (or Kdp) system, which catalyzes the hydrolysis of ATP coupled with the electrogenic transport of potassium into the cytoplasm. This subunit binds the extracellular potassium ions and delivers the ions to the membrane domain of KdpB through an intramembrane tunnel. This is Potassium-transporting ATPase potassium-binding subunit from Bacillus cereus (strain Q1).